The chain runs to 155 residues: SsrA-binding protein (155 aa).

This sequence belongs to the SmpB family.

It localises to the cytoplasm. Required for rescue of stalled ribosomes mediated by trans-translation. Binds to transfer-messenger RNA (tmRNA), required for stable association of tmRNA with ribosomes. tmRNA and SmpB together mimic tRNA shape, replacing the anticodon stem-loop with SmpB. tmRNA is encoded by the ssrA gene; the 2 termini fold to resemble tRNA(Ala) and it encodes a 'tag peptide', a short internal open reading frame. During trans-translation Ala-aminoacylated tmRNA acts like a tRNA, entering the A-site of stalled ribosomes, displacing the stalled mRNA. The ribosome then switches to translate the ORF on the tmRNA; the nascent peptide is terminated with the 'tag peptide' encoded by the tmRNA and targeted for degradation. The ribosome is freed to recommence translation, which seems to be the essential function of trans-translation. The polypeptide is SsrA-binding protein (Streptococcus pneumoniae (strain Hungary19A-6)).